The following is a 512-amino-acid chain: ATP synthase subunit alpha 1 (512 aa).

169–176 (GDRQTGKT) is a binding site for ATP.

Belongs to the ATPase alpha/beta chains family. As to quaternary structure, F-type ATPases have 2 components, CF(1) - the catalytic core - and CF(0) - the membrane proton channel. CF(1) has five subunits: alpha(3), beta(3), gamma(1), delta(1), epsilon(1). CF(0) has four main subunits: a(1), b(1), b'(1) and c(9-12).

The protein localises to the cell inner membrane. It carries out the reaction ATP + H2O + 4 H(+)(in) = ADP + phosphate + 5 H(+)(out). In terms of biological role, produces ATP from ADP in the presence of a proton gradient across the membrane. The alpha chain is a regulatory subunit. In Cereibacter sphaeroides (strain ATCC 17029 / ATH 2.4.9) (Rhodobacter sphaeroides), this protein is ATP synthase subunit alpha 1.